The following is a 415-amino-acid chain: Histidine--tRNA ligase (415 aa).

It belongs to the class-II aminoacyl-tRNA synthetase family. In terms of assembly, homodimer.

It is found in the cytoplasm. The enzyme catalyses tRNA(His) + L-histidine + ATP = L-histidyl-tRNA(His) + AMP + diphosphate + H(+). This is Histidine--tRNA ligase from Gluconobacter oxydans (strain 621H) (Gluconobacter suboxydans).